Consider the following 241-residue polypeptide: Ribose-5-phosphate isomerase A (241 aa).

Substrate-binding positions include 28 to 31 (TGST), 83 to 86 (DGAD), and 96 to 99 (KGGG). The Proton acceptor role is filled by Glu-105. Lys-123 provides a ligand contact to substrate.

This sequence belongs to the ribose 5-phosphate isomerase family. In terms of assembly, homodimer.

It carries out the reaction aldehydo-D-ribose 5-phosphate = D-ribulose 5-phosphate. It functions in the pathway carbohydrate degradation; pentose phosphate pathway; D-ribose 5-phosphate from D-ribulose 5-phosphate (non-oxidative stage): step 1/1. In terms of biological role, catalyzes the reversible conversion of ribose-5-phosphate to ribulose 5-phosphate. This is Ribose-5-phosphate isomerase A from Rhodopseudomonas palustris (strain BisA53).